Reading from the N-terminus, the 994-residue chain is Sarcoplasmic/endoplasmic reticulum calcium ATPase 1 (994 aa).

Topologically, residues 1-48 (MEQAHTKTTEECLAYFGVNENTGLSLDQVKKNFDKFGPNELPAEEGKS) are cytoplasmic. The helical transmembrane segment at 49–69 (LWELVAEQFEDLLVRILLLAA) threads the bilayer. At 70-89 (IISFVLAWFEEGEETVTAFV) the chain is on the lumenal side. Residues 90-110 (EPFVILLILIANAVVGVWQER) form a helical membrane-spanning segment. Over 111–253 (NAEDAIEALK…QEKTPLQQKL (143 aa)) the chain is Cytoplasmic. The chain crosses the membrane as a helical span at residues 254-273 (DEFGEQLSKVISLICVAVWL). Over 274-295 (INIGHFNDPIHGGSWIKGAIYY) the chain is Lumenal. Residues 296-313 (FKIAVALAVAAIPEGLPA) traverse the membrane as a helical segment. The Ca(2+) site is built by Val304, Ala305, Ile307, and Glu309. The Cytoplasmic portion of the chain corresponds to 314–757 (VITTCLALGT…EEGRAIYNNM (444 aa)). Asp351 (4-aspartylphosphate intermediate) is an active-site residue. 2 residues coordinate Mg(2+): Asp351 and Thr353. Thr353, Glu442, Arg489, Lys515, Arg560, Thr625, Gly626, Asp627, Arg678, and Lys684 together coordinate ATP. Asp703 lines the Mg(2+) pocket. Residue Asn706 participates in ATP binding. Residues 758–777 (KQFIRYLISSNVGEVVCIFL) form a helical membrane-spanning segment. 2 residues coordinate Ca(2+): Asn768 and Glu771. Residues 778–787 (TAALGLPEAL) lie on the Lumenal side of the membrane. The helical transmembrane segment at 788 to 808 (IPVQLLWVNLVTDGLPATALG) threads the bilayer. Residues 788 to 808 (IPVQLLWVNLVTDGLPATALG) are interaction with PLN. The Ca(2+) site is built by Asn796, Thr799, and Asp800. Residues 809–828 (FNPPDLDIMDRPPRSPKEPL) are Cytoplasmic-facing. Residues 829-851 (ISGWLFFRYMAIGGYVGAATVGA) traverse the membrane as a helical segment. Over 852–897 (AAWWFMYADDGPNVTFYQLSHFMQCTEDNPDFEGHECEIFESPVPM) the chain is Lumenal. A disulfide bridge links Cys876 with Cys888. The chain crosses the membrane as a helical span at residues 898–917 (TMALSVLVTIEMCNALNSLS). Glu908 contacts Ca(2+). Residues 918-930 (ENQSLIRMPPWSN) lie on the Cytoplasmic side of the membrane. A helical membrane pass occupies residues 931–949 (FWLLGSICLSMSLHFLILY). Residues 932-943 (WLLGSICLSMSL) are interaction with PLN. Over 950 to 964 (VEPLPMIFKLTPLNV) the chain is Lumenal. A helical transmembrane segment spans residues 965 to 985 (EQWFIVLKMSFPVILLDELLK). Topologically, residues 986–994 (FVARNYLEG) are cytoplasmic.

This sequence belongs to the cation transport ATPase (P-type) (TC 3.A.3) family. Type IIA subfamily. As to quaternary structure, interacts with sarcolipin (SLN). Interacts with phospholamban (PLN). Interacts with myoregulin (MRLN). Interacts with DWORF. Interacts with VMP1. Mg(2+) serves as cofactor.

It localises to the endoplasmic reticulum membrane. It is found in the sarcoplasmic reticulum membrane. It carries out the reaction Ca(2+)(in) + ATP + H2O = Ca(2+)(out) + ADP + phosphate + H(+). Inhibited by sarcolipin (SLN) and myoregulin (MRLN). Also shown to be inhibited by phospholamban (PLN) in vitro. Enhanced by DWORF; DWORF increases activity by displacing sarcolipin (SLN), phospholamban (PLN) and myoregulin (MRLN). In terms of biological role, key regulator of striated muscle performance by acting as the major Ca(2+) ATPase responsible for the reuptake of cytosolic Ca(2+) into the sarcoplasmic reticulum. Catalyzes the hydrolysis of ATP coupled with the translocation of calcium from the cytosol to the sarcoplasmic reticulum lumen. Contributes to calcium sequestration involved in muscular excitation/contraction. This is Sarcoplasmic/endoplasmic reticulum calcium ATPase 1 (ATP2A1) from Pelophylax lessonae (Pool frog).